The primary structure comprises 701 residues: Protein SOSEKI 1 (701 aa).

The tract at residues 8–101 (LSAQVLYQLS…YVLRASELID (94 aa)) is DIX-like oligomerization domain. 4 disordered regions span residues 238-262 (STVH…FSPG), 300-329 (LPPN…SLNE), 366-389 (PYNT…YRTK), and 538-575 (IASS…LASP). Over residues 306–319 (STHEDNSFWRDSRS) the composition is skewed to basic and acidic residues. Residues 658–687 (ILQECSICRRTFKPDSLQVHMRGCHPPQYA) form a C2HC/C3H-type zinc finger. Zn(2+) is bound by residues Cys662, Cys665, His677, and Cys681.

Belongs to the SOSEKI family. In terms of assembly, homodimer. Forms long polymer filaments with other SOKs proteins polymers crucial for polar localization and biological activity. Zn(2+) is required as a cofactor.

The protein resides in the cell membrane. SOSEKI proteins locally interpret global polarity cues and can influence cell division orientation to coordinate cell polarization relative to body axes. The chain is Protein SOSEKI 1 from Physcomitrium patens (Spreading-leaved earth moss).